Here is a 1915-residue protein sequence, read N- to C-terminus: Protein TIC 214 (1915 aa).

Helical transmembrane passes span 18–38, 64–84, 90–110, 126–146, 174–194, and 230–250; these read IINS…FSIG, FITG…HLAL, ITVL…HKYF, LNIQ…HFIL, VGWL…LIWI, and IFSI…PSTL. Disordered regions lie at residues 260 to 319 and 1566 to 1631; these read KMKQ…EIRV and NKNI…GSVL. Over residues 267-277 the composition is skewed to acidic residues; that stretch reads SEEETDVEIET. Residues 279 to 288 show a composition bias toward basic and acidic residues; that stretch reads SETKETKEEQ. Residues 304-315 show a composition bias toward acidic residues; sequence EKEDPDKIDETE. Over residues 1587-1601 the composition is skewed to basic and acidic residues; that stretch reads KSLELENRNQEEKES. Polar residues predominate over residues 1602 to 1631; that stretch reads SSQGDLGSNAQNQGNLGPNAQNQGNLGSVL.

The protein belongs to the TIC214 family. Part of the Tic complex.

The protein localises to the plastid. It is found in the chloroplast inner membrane. Involved in protein precursor import into chloroplasts. May be part of an intermediate translocation complex acting as a protein-conducting channel at the inner envelope. The polypeptide is Protein TIC 214 (Platanus occidentalis (Sycamore)).